The primary structure comprises 99 residues: MIKLRLRRMGKKRQPHYRIVAAEARWPRDGRFIEVIGYYNPRTDPYTLEVNVERARWWLEHGAQPTDTVRALLVRAGVLPPRQQNEAKRETAETAQPEA.

The segment at Pro-80–Ala-99 is disordered.

The protein belongs to the bacterial ribosomal protein bS16 family.

The protein is Small ribosomal subunit protein bS16 of Thermomicrobium roseum (strain ATCC 27502 / DSM 5159 / P-2).